The sequence spans 389 residues: S-adenosylmethionine synthase (389 aa).

Residue His-15 coordinates ATP. Residue Asp-17 participates in Mg(2+) binding. Residue Glu-43 coordinates K(+). Glu-56 and Gln-99 together coordinate L-methionine. A flexible loop region spans residues 99–109 (QSPDIAQGVNE). Residues 166 to 168 (DAK), 234 to 235 (RF), Asp-243, 249 to 250 (RK), Ala-266, and Lys-270 each bind ATP. Asp-243 serves as a coordination point for L-methionine. Lys-274 contacts L-methionine.

Belongs to the AdoMet synthase family. In terms of assembly, homotetramer; dimer of dimers. Mg(2+) is required as a cofactor. Requires K(+) as cofactor.

It is found in the cytoplasm. The enzyme catalyses L-methionine + ATP + H2O = S-adenosyl-L-methionine + phosphate + diphosphate. The protein operates within amino-acid biosynthesis; S-adenosyl-L-methionine biosynthesis; S-adenosyl-L-methionine from L-methionine: step 1/1. In terms of biological role, catalyzes the formation of S-adenosylmethionine (AdoMet) from methionine and ATP. The overall synthetic reaction is composed of two sequential steps, AdoMet formation and the subsequent tripolyphosphate hydrolysis which occurs prior to release of AdoMet from the enzyme. The chain is S-adenosylmethionine synthase from Neisseria meningitidis serogroup C (strain 053442).